The primary structure comprises 93 residues: Large ribosomal subunit protein eL43 (93 aa).

The C4-type zinc-finger motif lies at 39 to 60; the sequence is CEFCGKYGVKRKAVGIWGCKDC.

Belongs to the eukaryotic ribosomal protein eL43 family.

This Brassica rapa subsp. rapa (Turnip) protein is Large ribosomal subunit protein eL43 (RPL37A).